A 224-amino-acid chain; its full sequence is UPF0758 protein Pmen_4376 (224 aa).

An MPN domain is found at 102–224 (ALESPQAVRD…PLSMAELGWM (123 aa)). Residues His-173, His-175, and Asp-186 each contribute to the Zn(2+) site. The JAMM motif motif lies at 173 to 186 (HNHPSGVCEPSQAD).

It belongs to the UPF0758 family.

The protein is UPF0758 protein Pmen_4376 of Ectopseudomonas mendocina (strain ymp) (Pseudomonas mendocina).